We begin with the raw amino-acid sequence, 122 residues long: Seripauperin-5 (122 aa).

The helical transmembrane segment at 7–24 (IAAGVAAIAAGASAAATT) threads the bilayer.

Belongs to the SRP1/TIP1 family. Seripauperin subfamily.

The protein localises to the membrane. In Saccharomyces cerevisiae (strain ATCC 204508 / S288c) (Baker's yeast), this protein is Seripauperin-5 (PAU5).